A 161-amino-acid chain; its full sequence is Transcription antitermination protein NusB (161 aa).

This sequence belongs to the NusB family.

Functionally, involved in transcription antitermination. Required for transcription of ribosomal RNA (rRNA) genes. Binds specifically to the boxA antiterminator sequence of the ribosomal RNA (rrn) operons. This Syntrophus aciditrophicus (strain SB) protein is Transcription antitermination protein NusB.